The following is a 307-amino-acid chain: HPr kinase/phosphorylase (307 aa).

Active-site residues include histidine 136 and lysine 157. 151–158 contacts ATP; the sequence is GESGIGKS. Serine 158 contributes to the Mg(2+) binding site. Aspartate 175 (proton acceptor; for phosphorylation activity. Proton donor; for dephosphorylation activity) is an active-site residue. The segment at 198-207 is important for the catalytic mechanism of both phosphorylation and dephosphorylation; sequence LEVRGMGIID. Glutamate 199 is a Mg(2+) binding site. The active site involves arginine 240. The tract at residues 261 to 266 is important for the catalytic mechanism of dephosphorylation; that stretch reads PIRPGR.

The protein belongs to the HPrK/P family. Homohexamer. It depends on Mg(2+) as a cofactor.

It catalyses the reaction [HPr protein]-L-serine + ATP = [HPr protein]-O-phospho-L-serine + ADP + H(+). It carries out the reaction [HPr protein]-O-phospho-L-serine + phosphate + H(+) = [HPr protein]-L-serine + diphosphate. In terms of biological role, catalyzes the ATP- as well as the pyrophosphate-dependent phosphorylation of a specific serine residue in HPr, a phosphocarrier protein of the phosphoenolpyruvate-dependent sugar phosphotransferase system (PTS). HprK/P also catalyzes the pyrophosphate-producing, inorganic phosphate-dependent dephosphorylation (phosphorolysis) of seryl-phosphorylated HPr (P-Ser-HPr). The two antagonistic activities of HprK/P are regulated by several intracellular metabolites, which change their concentration in response to the absence or presence of rapidly metabolisable carbon sources (glucose, fructose, etc.) in the growth medium. Therefore, by controlling the phosphorylation state of HPr, HPrK/P is a sensor enzyme that plays a major role in the regulation of carbon metabolism and sugar transport: it mediates carbon catabolite repression (CCR), and regulates PTS-catalyzed carbohydrate uptake and inducer exclusion. The protein is HPr kinase/phosphorylase of Clostridium novyi (strain NT).